The sequence spans 556 residues: Peptidylarginine deiminase (556 aa).

Residues M1–A23 form the signal peptide. A propeptide spanning residues Q24–R43 is cleaved from the precursor. The active-site Amidino-cysteine intermediate is the C351.

Belongs to the agmatine deiminase family. FAD serves as cofactor. Requires FMN as cofactor.

It localises to the secreted. Inhibited by cysteine and TLCK. Inhibited by high concentration of thiourea and thio-L-citrulline. Its function is as follows. Deiminates the guanidino group of C-terminal arginine residues on a variety of peptides, including the vasoregulatory peptide-hormone bradykinin, to yield ammonia and a citrulline residue. May promote the growth of the pathogen in the periodontal pocket by producing ammonia, ammonia having a protective effect during acidic cleaning cycles in the mouth. This is Peptidylarginine deiminase from Porphyromonas gingivalis (strain ATCC BAA-308 / W83).